The sequence spans 465 residues: Gamma-aminobutyric acid receptor subunit alpha-6 (465 aa).

Residues 1-19 form the signal peptide; the sequence is MALLIAWVCVAVSIEKALG. Topologically, residues 20-243 are extracellular; sequence GQGDGGDLYS…FHLQRKMGYF (224 aa). The N-linked (GlcNAc...) asparagine glycan is linked to N31. Residue R84 participates in 4-aminobutanoate binding. Residues N128 and N141 are each glycosylated (N-linked (GlcNAc...) asparagine). T147 lines the 4-aminobutanoate pocket. C156 and C170 are joined by a disulfide. Residues 244-264 traverse the membrane as a helical segment; that stretch reads MIQIYTPCIMTVILSQVSFWI. The Cytoplasmic portion of the chain corresponds to 265 to 270; that stretch reads NKESVP. Residues 271-290 form a helical membrane-spanning segment; that stretch reads ARTVFGITTVLTMTTLSISA. At 291 to 304 the chain is on the extracellular side; sequence RHSLPKVSYATAMD. The chain crosses the membrane as a helical span at residues 305–325; the sequence is WFIAVCFAFVFSALIEFAAVN. At 326–424 the chain is on the cytoplasmic side; the sequence is YFTNLQTQRA…GTSKIDQYSR (99 aa). The tract at residues 392-415 is disordered; sequence NSASQCQPVSAPPPAPPAPPPVGG. Positions 401–413 are enriched in pro residues; the sequence is SAPPPAPPAPPPV. Residues 425 to 445 traverse the membrane as a helical segment; it reads ILFPVAFAGFNLVYWVVYLSK. Residues 446–465 lie on the Extracellular side of the membrane; sequence DTMEFFEPTAMHLRNDHQSN.

It belongs to the ligand-gated ion channel (TC 1.A.9) family. Gamma-aminobutyric acid receptor (TC 1.A.9.5) subfamily. GABRA6 sub-subfamily. As to quaternary structure, heteropentamer, formed by a combination of alpha (GABRA1-6), beta (GABRB1-3), gamma (GABRG1-3), delta (GABRD), epsilon (GABRE), rho (GABRR1-3), pi (GABRP) and theta (GABRQ) chains, each subunit exhibiting distinct physiological and pharmacological properties. As to expression, expressed in brain, in cerebellar granule cells.

It localises to the postsynaptic cell membrane. The protein localises to the cell membrane. It carries out the reaction chloride(in) = chloride(out). In terms of biological role, alpha subunit of the heteropentameric ligand-gated chloride channel gated by gamma-aminobutyric acid (GABA), a major inhibitory neurotransmitter in the brain. GABA-gated chloride channels, also named GABA(A) receptors (GABAAR), consist of five subunits arranged around a central pore and contain GABA active binding site(s) located at the alpha and beta subunit interface(s). When activated by GABA, GABAARs selectively allow the flow of chloride anions across the cell membrane down their electrochemical gradient. The protein is Gamma-aminobutyric acid receptor subunit alpha-6 (GABRA6) of Gallus gallus (Chicken).